The following is a 116-amino-acid chain: NADH-ubiquinone oxidoreductase chain 3 (116 aa).

The next 3 helical transmembrane spans lie at 3 to 23 (LITT…TISF), 56 to 76 (FFLI…LLPL), and 87 to 107 (LTLI…IYEW).

This sequence belongs to the complex I subunit 3 family.

The protein resides in the mitochondrion membrane. The enzyme catalyses a ubiquinone + NADH + 5 H(+)(in) = a ubiquinol + NAD(+) + 4 H(+)(out). Functionally, core subunit of the mitochondrial membrane respiratory chain NADH dehydrogenase (Complex I) that is believed to belong to the minimal assembly required for catalysis. Complex I functions in the transfer of electrons from NADH to the respiratory chain. The immediate electron acceptor for the enzyme is believed to be ubiquinone. The sequence is that of NADH-ubiquinone oxidoreductase chain 3 (MT-ND3) from Oncorhynchus tshawytscha (Chinook salmon).